We begin with the raw amino-acid sequence, 38 residues long: Photosystem II reaction center protein L (38 aa).

The chain crosses the membrane as a helical span at residues Ser-17 to Phe-37.

It belongs to the PsbL family. As to quaternary structure, PSII is composed of 1 copy each of membrane proteins PsbA, PsbB, PsbC, PsbD, PsbE, PsbF, PsbH, PsbI, PsbJ, PsbK, PsbL, PsbM, PsbT, PsbY, PsbZ, Psb30/Ycf12, at least 3 peripheral proteins of the oxygen-evolving complex and a large number of cofactors. It forms dimeric complexes.

The protein localises to the plastid. It is found in the chloroplast thylakoid membrane. Functionally, one of the components of the core complex of photosystem II (PSII). PSII is a light-driven water:plastoquinone oxidoreductase that uses light energy to abstract electrons from H(2)O, generating O(2) and a proton gradient subsequently used for ATP formation. It consists of a core antenna complex that captures photons, and an electron transfer chain that converts photonic excitation into a charge separation. This subunit is found at the monomer-monomer interface and is required for correct PSII assembly and/or dimerization. This is Photosystem II reaction center protein L from Bigelowiella natans (Pedinomonas minutissima).